Reading from the N-terminus, the 295-residue chain is Sulfotransferase 1A1 (295 aa).

Residue 48-53 participates in 3'-phosphoadenylyl sulfate binding; sequence KSGTTW. 106–108 contacts substrate; sequence KTH. The active-site Proton acceptor is the His-108. Residues Arg-130, Ser-138, Tyr-193, 227–232, and 255–259 each bind 3'-phosphoadenylyl sulfate; these read TSFKEM and FMRKG. Ser-138 carries the phosphoserine modification.

Belongs to the sulfotransferase 1 family. As to quaternary structure, homodimer. Liver, lung, adrenal, brain, platelets and skin.

The protein localises to the cytoplasm. The catalysed reaction is a phenol + 3'-phosphoadenylyl sulfate = an aryl sulfate + adenosine 3',5'-bisphosphate + H(+). It carries out the reaction 17beta-estradiol + 3'-phosphoadenylyl sulfate = 17beta-estradiol 3-sulfate + adenosine 3',5'-bisphosphate + H(+). The enzyme catalyses 4-ethylphenol + 3'-phosphoadenylyl sulfate = 4-ethylphenyl sulfate + adenosine 3',5'-bisphosphate + H(+). It catalyses the reaction 4-nitrophenol + 3'-phosphoadenylyl sulfate = 4-nitrophenyl sulfate + adenosine 3',5'-bisphosphate. The catalysed reaction is dopamine + 3'-phosphoadenylyl sulfate = dopamine 3-O-sulfate + adenosine 3',5'-bisphosphate + H(+). It carries out the reaction dopamine + 3'-phosphoadenylyl sulfate = dopamine 4-O-sulfate + adenosine 3',5'-bisphosphate + H(+). The enzyme catalyses 3,3',5-triiodo-L-thyronine + 3'-phosphoadenylyl sulfate = 3,3',5-triiodo-L-thyronine sulfate + adenosine 3',5'-bisphosphate + H(+). It catalyses the reaction 3,3',5'-triiodo-L-thyronine + 3'-phosphoadenylyl sulfate = 3,3',5'-triiodo-L-thyronine sulfate + adenosine 3',5'-bisphosphate + H(+). The catalysed reaction is 3,3'-diiodo-L-thyronine + 3'-phosphoadenylyl sulfate = 3,3'-diiodo-L-thyronine sulfate + adenosine 3',5'-bisphosphate + H(+). It carries out the reaction L-thyroxine + 3'-phosphoadenylyl sulfate = L-thyroxine sulfate + adenosine 3',5'-bisphosphate + H(+). In terms of biological role, sulfotransferase that utilizes 3'-phospho-5'-adenylyl sulfate (PAPS) as sulfonate donor to catalyze the sulfate conjugation of a wide variety of acceptor molecules bearing a hydroxyl or an amine group. Sulfonation increases the water solubility of most compounds, and therefore their renal excretion, but it can also result in bioactivation to form active metabolites. Displays broad substrate specificity for small phenolic compounds. Plays an important role in the sulfonation of endogenous molecules such as steroid hormones. Mediates the sulfate conjugation of a variety of xenobiotics, including the drugs acetaminophen and minoxidil. Mediates also the metabolic activation of carcinogenic N-hydroxyarylamines leading to highly reactive intermediates capable of forming DNA adducts, potentially resulting in mutagenesis. May play a role in gut microbiota-host metabolic interaction. O-sulfonates 4-ethylphenol (4-EP), a dietary tyrosine-derived metabolite produced by gut bacteria. The product 4-EPS crosses the blood-brain barrier and may negatively regulate oligodendrocyte maturation and myelination, affecting the functional connectivity of different brain regions associated with the limbic system. Catalyzes the sulfate conjugation of dopamine. Catalyzes the sulfation of T4 (L-thyroxine/3,5,3',5'-tetraiodothyronine), T3 (3,5,3'-triiodothyronine), rT3 (3,3',5'-triiodothyronine) and 3,3'-T2 (3,3'-diiodothyronine), with a substrate preference of 3,3'-T2 &gt; rT3 &gt; T3 &gt; T4. The protein is Sulfotransferase 1A1 (SULT1A1) of Homo sapiens (Human).